The following is a 437-amino-acid chain: GTPase Era, mitochondrial (437 aa).

The N-terminal 43 residues, Met1–Cys43, are a transit peptide targeting the mitochondrion. One can recognise an Era-type G domain in the interval Arg112 to Gly330. The tract at residues Gly120 to Ser127 is G1. GTP is bound at residue Gly120–Ser127. Residues His146–Ser150 are G2. Residues Asp167–Gly170 form a G3 region. Asp167–Leu171 provides a ligand contact to GTP. Phosphoserine is present on Ser173. Asn236–Asp239 contacts GTP. A G4 region spans residues Asn236–Asp239. The tract at residues Leu264–Gln296 is disordered. The segment at Leu308–Ala310 is G5. Residues Leu360 to Lys437 enclose the KH type-2 domain.

The protein belongs to the TRAFAC class TrmE-Era-EngA-EngB-Septin-like GTPase superfamily. Era GTPase family.

The protein resides in the mitochondrion matrix. It is found in the mitochondrion inner membrane. In terms of biological role, probable GTPase that plays a role in the mitochondrial ribosomal small subunit assembly. Specifically binds the 12S mitochondrial rRNA (12S mt-rRNA) to a 33 nucleotide section delineating the 3' terminal stem-loop region. May act as a chaperone that protects the 12S mt-rRNA on the 28S mitoribosomal subunit during ribosomal small subunit assembly. In Bos taurus (Bovine), this protein is GTPase Era, mitochondrial (ERAL1).